We begin with the raw amino-acid sequence, 358 residues long: Core-capsid bridging protein (358 aa).

Residues 296 to 331 (PSITPTPGYRGTTFKPSRTRSTRRRRSVRRRSRRTA) are disordered. Over residues 312 to 329 (SRTRSTRRRRSVRRRSRR) the composition is skewed to basic residues.

It belongs to the adenoviridae core-capsid bridging protein family. In terms of assembly, monomer. Homodimer. Exists in equilibrium between monomers and dimers in solution. Interacts with the histone-like nucleoprotein; this interactions bridge the virus core to the capsid. Interacts with core protein X; this interactions bridge the virus core to the capsid. Interacts with the endosome lysis protein VI; this interactions bridge the virus core to the capsid. Interacts with the peripentonal hexons. Interacts with host NPM1; this interaction might play a role in virus assembly.

The protein localises to the virion. Its subcellular location is the host nucleus. The protein resides in the host nucleolus. In terms of biological role, associates loosely with the viral DNA to form an outer shell around the nucleoprotein-DNA complex and links it with the capsid by binding the endosome lysis protein. Dissociates from the viral genome during entry. Might be involved in nuclear capsid assembly of the viral particles through its association with NPM1/nucleophosmin. This Human adenovirus F serotype 40 (HAdV-40) protein is Core-capsid bridging protein.